Here is a 191-residue protein sequence, read N- to C-terminus: Large ribosomal subunit protein uL6B (191 aa).

The protein belongs to the universal ribosomal protein uL6 family. Component of the large ribosomal subunit (LSU). Mature yeast ribosomes consist of a small (40S) and a large (60S) subunit. The 40S small subunit contains 1 molecule of ribosomal RNA (18S rRNA) and 33 different proteins (encoded by 57 genes). The large 60S subunit contains 3 rRNA molecules (25S, 5.8S and 5S rRNA) and 46 different proteins (encoded by 81 genes).

The protein localises to the cytoplasm. In terms of biological role, component of the ribosome, a large ribonucleoprotein complex responsible for the synthesis of proteins in the cell. The small ribosomal subunit (SSU) binds messenger RNAs (mRNAs) and translates the encoded message by selecting cognate aminoacyl-transfer RNA (tRNA) molecules. The large subunit (LSU) contains the ribosomal catalytic site termed the peptidyl transferase center (PTC), which catalyzes the formation of peptide bonds, thereby polymerizing the amino acids delivered by tRNAs into a polypeptide chain. The nascent polypeptides leave the ribosome through a tunnel in the LSU and interact with protein factors that function in enzymatic processing, targeting, and the membrane insertion of nascent chains at the exit of the ribosomal tunnel. This chain is Large ribosomal subunit protein uL6B, found in Saccharomyces cerevisiae (strain ATCC 204508 / S288c) (Baker's yeast).